The primary structure comprises 155 residues: Small ribosomal subunit protein uS10m (155 aa).

This sequence belongs to the universal ribosomal protein uS10 family. In terms of assembly, component of the mitochondrial ribosome small subunit (28S) which comprises a 12S rRNA and about 30 distinct proteins.

Its subcellular location is the mitochondrion. This Rattus norvegicus (Rat) protein is Small ribosomal subunit protein uS10m (Mrps10).